The chain runs to 353 residues: Ion-translocating oxidoreductase complex subunit D (353 aa).

3 consecutive transmembrane segments (helical) span residues 20 to 39, 68 to 88, and 129 to 149; these read LMRL…WYFF, PISH…LGIC, and VMLL…LTLV. At T187 the chain carries FMN phosphoryl threonine. The next 4 membrane-spanning stretches (helical) occupy residues 215 to 235, 238 to 258, 267 to 287, and 300 to 320; these read LALG…FLIS, AIAW…SFIG, ASTM…FILT, and IIVG…GGYP.

It belongs to the NqrB/RnfD family. As to quaternary structure, the complex is composed of six subunits: RnfA, RnfB, RnfC, RnfD, RnfE and RnfG. Requires FMN as cofactor.

It is found in the cell inner membrane. Part of a membrane-bound complex that couples electron transfer with translocation of ions across the membrane. The chain is Ion-translocating oxidoreductase complex subunit D from Colwellia psychrerythraea (strain 34H / ATCC BAA-681) (Vibrio psychroerythus).